Here is a 150-residue protein sequence, read N- to C-terminus: MAPKKKEVTRIAKLNLIGGQAKPGPALASVGINMAEFTKSFNDKTKDQNGKVIPVIITAYKDKSFDYVVKTTPVTYLLKDAAKIKSGAKDPKKQVVATISKEQALEIARYKLVDMTAYDEEAALRMIAGSAKQMGIAIEGVSAYKEKKGN.

Belongs to the universal ribosomal protein uL11 family. In terms of assembly, part of the ribosomal stalk of the 50S ribosomal subunit. Interacts with L10 and the large rRNA to form the base of the stalk. L10 forms an elongated spine to which L12 dimers bind in a sequential fashion forming a multimeric L10(L12)X complex. Post-translationally, one or more lysine residues are methylated.

In terms of biological role, forms part of the ribosomal stalk which helps the ribosome interact with GTP-bound translation factors. The polypeptide is Large ribosomal subunit protein uL11 (Ureaplasma urealyticum serovar 10 (strain ATCC 33699 / Western)).